The primary structure comprises 315 residues: Acetaldehyde dehydrogenase 2 (315 aa).

13-16 (SGNI) lines the NAD(+) pocket. Cys-131 serves as the catalytic Acyl-thioester intermediate. NAD(+) contacts are provided by residues 162-170 (SAGPGTRAN) and Asn-290.

This sequence belongs to the acetaldehyde dehydrogenase family.

The catalysed reaction is acetaldehyde + NAD(+) + CoA = acetyl-CoA + NADH + H(+). The protein is Acetaldehyde dehydrogenase 2 of Pseudomonas putida (strain W619).